An 804-amino-acid polypeptide reads, in one-letter code: Zinc finger protein 541 (804 aa).

2 disordered regions span residues 21-120 (SKAS…NPDI) and 133-197 (TLDL…GNPR). The C2H2-type 1 zinc finger occupies 285–307 (FICKNCSQMFYTEKGLSSHMCFH). The segment at 379–426 (MEQEKDGEERDSKESSQQRKRKKRPPPKRLFIPPPPSTAGEPGPAGCH) is disordered. Over residues 380–395 (EQEKDGEERDSKESSQ) the composition is skewed to basic and acidic residues. Basic residues predominate over residues 396–405 (QRKRKKRPPP). The 93-residue stretch at 509-601 (PHINIGSRFQ…VALETLLLRG (93 aa)) folds into the ELM2 domain. In terms of domain architecture, SANT spans 616–667 (TGSDVWTPIEKRLFKKAFYAHKKDFYLIHKTIQTKTVAQCVEYYYIWKKMIK). Residues 680 to 743 (VKREPEEVER…TPEPSGSVES (64 aa)) form a disordered region. Residues 690–721 (TEEKVPCSPRERPSHHPIPELKIKTKSYRRES) are compositionally biased toward basic and acidic residues. The segment at 747–769 (FPCRECERVFDKIKSRNAHMKRH) adopts a C2H2-type 2 zinc-finger fold.

As to quaternary structure, interacts with DNTTIP1. Identified in a complex with KCDT19, HDAC1 and HSPA2s. Component of a histone deacetylase complex containing DNTTIP1, ZNF541, HDAC1 and HDAC2. Identified in a complex with HDAC1, HDAC2, DNTTIP1 and KCTD19.

It localises to the nucleus. In terms of biological role, transcription regulator which is essential for male fertility and for the completion of meiotic prophase in spermatocytes. Regulates progression of the pachytene stage of meiotic prophase by activating the expression of genes involved in meiosis and post-meiosis during spermatogenesis. Maintains the repression of pre-pachytene transcriptional programs, including meiotic double-strand breaks (DSB) formation genes in pachytene spermatocytes and suppresses aberrant DSB formation after mid-pachytene, thus ensuring meiosis progression. The chain is Zinc finger protein 541 (ZNF541) from Macaca fascicularis (Crab-eating macaque).